The following is a 99-amino-acid chain: MMNMQNMMKQAQKLQKQMEQKQADLAATSFSGKSAQELVTATFTGDKRLVNITFKEAVVDPEDIETLQDMTTQAINDALTQIDEATKKSLGAFAGKLPF.

This sequence belongs to the YbaB/EbfC family. Homodimer.

It localises to the cytoplasm. The protein localises to the nucleoid. Functionally, binds to DNA and alters its conformation. May be involved in regulation of gene expression, nucleoid organization and DNA protection. This is Nucleoid-associated protein SZO_16661 from Streptococcus equi subsp. zooepidemicus (strain H70).